The sequence spans 249 residues: Ditrans,polycis-undecaprenyl-diphosphate synthase ((2E,6E)-farnesyl-diphosphate specific) (249 aa).

Aspartate 29 is a catalytic residue. Residue aspartate 29 participates in Mg(2+) binding. Residues 30 to 33 (GNGR), tryptophan 34, arginine 42, histidine 46, and 74 to 76 (STE) contribute to the substrate site. Asparagine 77 serves as the catalytic Proton acceptor. Residues tryptophan 78, arginine 80, arginine 197, and 203-205 (RLS) contribute to the substrate site. Glutamate 216 provides a ligand contact to Mg(2+).

The protein belongs to the UPP synthase family. Homodimer. Requires Mg(2+) as cofactor.

It catalyses the reaction 8 isopentenyl diphosphate + (2E,6E)-farnesyl diphosphate = di-trans,octa-cis-undecaprenyl diphosphate + 8 diphosphate. Its function is as follows. Generates ditrans,octacis-undecaprenyl pyrophosphate (UPP) from isopentenyl pyrophosphate (IPP) and farnesyl diphosphate. UPP is the precursor of glycosyl carrier lipid in the biosynthesis of bacterial cell wall polysaccharide components such as peptidoglycan and lipopolysaccharide. This Micrococcus luteus (Micrococcus lysodeikticus) protein is Ditrans,polycis-undecaprenyl-diphosphate synthase ((2E,6E)-farnesyl-diphosphate specific) (uppS).